The sequence spans 318 residues: MYFVNLLTTIIPILLAVAFLTLLERKFLGYMQLRKGPNIVGPYGLLQPITDAVKLFIKEPLQPLTSSLILFIIAPTLALTLALMMWIPLPMPHPLVNMNLSILFMLALSSLAVYAILWSGWASNSKYALIGALRAVAQTISYEVTLAIIILSVLLMNGSFTLSTLITTQEHIWLLLPSWPLAMMWFISTLAETNRAPFDLTEGESELVSGFNVEYAGGPFALFFLAEYANIIMMNALTTILFLGAHNNSLFPEMYTTNFMLKTLLFTTFFLWIRASYPRFRYDQLMHLLWKNFLPLTLVMCMWHITLPIILASIPPQT.

A run of 8 helical transmembrane segments spans residues 3 to 23 (FVNL…LTLL), 68 to 88 (LILF…MWIP), 102 to 122 (ILFM…SGWA), 146 to 166 (LAII…STLI), 171 to 191 (HIWL…STLA), 222 to 242 (LFFL…TILF), 253 to 273 (EMYT…FLWI), and 294 to 314 (LPLT…LASI).

The protein belongs to the complex I subunit 1 family.

Its subcellular location is the mitochondrion inner membrane. The catalysed reaction is a ubiquinone + NADH + 5 H(+)(in) = a ubiquinol + NAD(+) + 4 H(+)(out). Functionally, core subunit of the mitochondrial membrane respiratory chain NADH dehydrogenase (Complex I) that is believed to belong to the minimal assembly required for catalysis. Complex I functions in the transfer of electrons from NADH to the respiratory chain. The immediate electron acceptor for the enzyme is believed to be ubiquinone. This is NADH-ubiquinone oxidoreductase chain 1 (MT-ND1) from Nyctalus plancyi velutinus (Fine-haired noctule).